The sequence spans 356 residues: Sulfate/thiosulfate import ATP-binding protein CysA (356 aa).

Residues 3–237 (IEVKNLVKRF…PKNSFVFHFL (235 aa)) form the ABC transporter domain. 35 to 42 (GPSGSGKT) is a binding site for ATP.

Belongs to the ABC transporter superfamily. Sulfate/tungstate importer (TC 3.A.1.6) family. As to quaternary structure, the complex is composed of two ATP-binding proteins (CysA), two transmembrane proteins (CysT and CysW) and a solute-binding protein (CysP).

Its subcellular location is the cell inner membrane. The enzyme catalyses sulfate(out) + ATP + H2O = sulfate(in) + ADP + phosphate + H(+). It catalyses the reaction thiosulfate(out) + ATP + H2O = thiosulfate(in) + ADP + phosphate + H(+). Its function is as follows. Part of the ABC transporter complex CysAWTP involved in sulfate/thiosulfate import. Responsible for energy coupling to the transport system. The chain is Sulfate/thiosulfate import ATP-binding protein CysA from Leptospira interrogans serogroup Icterohaemorrhagiae serovar copenhageni (strain Fiocruz L1-130).